A 4226-amino-acid chain; its full sequence is Guanylate cyclase alpha (4226 aa).

Over 1 to 104 (MSDSKKHYNE…SFIFKGLYEQ (104 aa)) the chain is Cytoplasmic. The helical transmembrane segment at 105–125 (FLRLPNIWFLLISLLEFIPQY) threads the bilayer. The Extracellular segment spans residues 126 to 131 (QNLSNY). Asparagine 127 carries N-linked (GlcNAc...) asparagine glycosylation. A helical membrane pass occupies residues 132 to 152 (MYYSKHSSFFLLLFFICVSII). Over 153-337 (KNIYEDSRRS…LGYVNKELNS (185 aa)) the chain is Cytoplasmic. The helical transmembrane segment at 338–358 (YTIIGLIFTFICVFISVLFKW) threads the bilayer. Over 359–392 (TEDDKFRNGSHFFLITVKDNICESIVKYTLLYSN) the chain is Extracellular. The N-linked (GlcNAc...) asparagine glycan is linked to asparagine 366. A helical transmembrane segment spans residues 393–413 (IIPISILISVDLISILQSILI). At 414–2083 (ENDNHISTFE…FIYGSKHLYT (1670 aa)) the chain is on the cytoplasmic side. 4 disordered regions span residues 552 to 572 (EHSQTLDNNNNNDNNNNNNIC), 832 to 904 (SSKN…SNND), 968 to 989 (INNNNNNNNDQKTNNLKYKSSS), and 1740 to 1765 (NINKNYKYDKNDKHNNNNNNNNNNSN). Residues 558–570 (DNNNNNDNNNNNN) are compositionally biased toward low complexity. Residues 838 to 847 (TLDDPTELIS) show a composition bias toward acidic residues. The segment covering 854–873 (LRDKYEHTSDKKNDTNKNRD) has biased composition (basic and acidic residues). The segment covering 874–904 (GANNSNNNNNKDVSNNKNKNNNNYNYNSNND) has biased composition (low complexity). A compositionally biased stretch (basic and acidic residues) spans 1745 to 1754 (YKYDKNDKHN). Over residues 1755-1765 (NNNNNNNNNSN) the composition is skewed to low complexity. Residues 2084–2104 (ISIILYWNFFKNILLILPIFF) traverse the membrane as a helical segment. Topologically, residues 2105–2119 (YQAYASWSCVKIYPE) are extracellular. A helical transmembrane segment spans residues 2120–2140 (LLYTFFSIFWVFIPIIYYMFL). At 2141–2169 (QHNLNYDILYNIPLFYALSRRRYNMNCFK) the chain is on the cytoplasmic side. The helical transmembrane segment at 2170–2190 (FLPWIFEAIFYSMIIYFFAYA) threads the bilayer. Residues 2191 to 2202 (ALKENSHLNNGE) are Extracellular-facing. Residues 2203 to 2223 (VITINTFGNICFIGCLLISIL) form a helical membrane-spanning segment. Topologically, residues 2224 to 2235 (RLFLEGSLWSPS) are cytoplasmic. Residues 2236-2256 (ILITCFGCFLFVFFPSLLFIC) form a helical membrane-spanning segment. The Extracellular portion of the chain corresponds to 2257 to 2275 (FAYLSNEYIREVFRQTFLW). The chain crosses the membrane as a helical span at residues 2276 to 2296 (APLYVLLILWFSTCIISYIFI). Residues 2297–2787 (NFTKSILFPN…QIHKKNKFYK (491 aa)) lie on the Cytoplasmic side of the membrane. Residues 2477–2505 (NNDNNNDDNDNDNNNNNNNNDNYNNNDHN) form a disordered region. The segment covering 2488-2502 (DNNNNNNNNDNYNNN) has biased composition (low complexity). Residues 2788 to 2808 (TFTPWYRFIFLLLGVFFLYVW) traverse the membrane as a helical segment. Over 2809–2828 (KLESSLSQLWNMPSDASTDV) the chain is Extracellular. The chain crosses the membrane as a helical span at residues 2829 to 2849 (FILFLSLLLELVLLAATVTTF). Topologically, residues 2850 to 2860 (FSNIFIENFNK) are cytoplasmic. Residues 2861 to 2881 (IISAVVILIITYHVVSYSVTH) traverse the membrane as a helical segment. Residues 2882-2900 (IDGVFQAVLFPLYTFVILR) lie on the Extracellular side of the membrane. The helical transmembrane segment at 2901 to 2921 (LPFVNAVLCNIIFLGLFIIRF) threads the bilayer. Topologically, residues 2922-2930 (NGDHFLDKK) are cytoplasmic. Residues 2931 to 2951 (GLAHYIPLFIGVDVFVGFVGY) traverse the membrane as a helical segment. Topologically, residues 2952–3008 (RLEYNQRKNFLLEYSVESSRRKQREILNTMLPPFVVDEMIYSELNEEGIPISLKAED) are extracellular. Residues 3009 to 3029 (ISTVTIIFCDIYDFQNIVASI) form a helical membrane-spanning segment. Residues 3013 to 3270 (TIIFCDIYDF…DTVNTASRMK (258 aa)) form the Guanylate cyclase 1 domain. The Cytoplasmic segment spans residues 3030–3738 (EPTRLVEVLD…SNINSIEQAL (709 aa)). Disordered stretches follow at residues 3077 to 3150 (EDEL…FEED) and 3201 to 3230 (DANDDTHNVNDSFNNDKAENDNTNTDNNKP). Composition is skewed to low complexity over residues 3083 to 3098 (NKYSNNNKNNNNNYYY) and 3108 to 3138 (NNNNNNNNNNNNNNNNNNNNLNNNNNNNNVN). Residues 3140–3150 (SDDDGDFFEED) are compositionally biased toward acidic residues. Residues 3201–3220 (DANDDTHNVNDSFNNDKAEN) are compositionally biased toward basic and acidic residues. A helical transmembrane segment spans residues 3739–3759 (IIFLVTFVMQTLISSTVSIVF). Residues 3760-3773 (IDHKRATQTLHINY) lie on the Extracellular side of the membrane. Residues 3774-3794 (FAYWSVRSVYTFFGFVLWLLF) traverse the membrane as a helical segment. Topologically, residues 3795–3811 (HYRTRPEVSSLLNIKWM) are cytoplasmic. Residues 3812–3832 (IFFLNLLFISAACVFSIAYLW) traverse the membrane as a helical segment. The Extracellular portion of the chain corresponds to 3833-3840 (AISETDQT). Residues 3841-3861 (TSYTIWMTNDTIEFFFYLVIL) traverse the membrane as a helical segment. The Cytoplasmic segment spans residues 3862 to 3871 (HHNTGMLFQT). The chain crosses the membrane as a helical span at residues 3872-3892 (CILVDLLFITMSLTFIATSVV). Residue lysine 3893 is a topological domain, extracellular. A helical membrane pass occupies residues 3894–3914 (TITTDSTVLLIPWYVAFNLIS). The Cytoplasmic portion of the chain corresponds to 3915–4226 (TYCKESIDRR…INVNDRQSNL (312 aa)). The Guanylate cyclase 2 domain occupies 3970 to 4104 (TFLFADICGF…IDVLTGNLME (135 aa)). The Mg(2+) site is built by aspartate 3975, isoleucine 3976, and aspartate 4019.

The protein in the N-terminal section; belongs to the cation transport ATPase (P-type) (TC 3.A.3) family. Type IV subfamily. It in the C-terminal section; belongs to the adenylyl cyclase class-4/guanylyl cyclase family. The cofactor is Mg(2+). It depends on Mn(2+) as a cofactor.

Its subcellular location is the cell membrane. The protein resides in the cytoplasmic vesicle membrane. It catalyses the reaction GTP = 3',5'-cyclic GMP + diphosphate. In terms of biological role, catalyzes the synthesis of the second messenger cGMP from GTP. In asexual blood stage schizonts, required for cGMP production which is essential for PKG activation, PKG-dependent Ca(2+) release, and ultimately merozoite egress from host erythrocytes. In Plasmodium falciparum (isolate 3D7), this protein is Guanylate cyclase alpha.